A 249-amino-acid polypeptide reads, in one-letter code: Probable aquaporin TIP-type (249 aa).

2 helical membrane passes run 22-42 (AGLA…GSGI) and 56-76 (AGLI…VSVG). The short motif at 85 to 87 (NPA) is the NPA 1 element. A run of 3 helical transmembrane segments spans residues 103 to 123 (IVYI…LVFV), 137 to 157 (VGVG…VYTV), and 169 to 189 (IGII…LVGG). Positions 197 to 199 (NPA) match the NPA 2 motif. Residues 217–237 (YWAGPLIGGGIAGLVYEVLFI) traverse the membrane as a helical segment.

The protein belongs to the MIP/aquaporin (TC 1.A.8) family. TIP (TC 1.A.8.10) subfamily. As to expression, expression is highest in root tips, with slightly lower levels of hybridizing mRNA in stems, and whole roots, and much lower levels in nodules and leaves.

It is found in the membrane. Aquaporins facilitate the transport of water and small neutral solutes across cell membranes. The protein is Probable aquaporin TIP-type (MCP1) of Medicago sativa (Alfalfa).